The chain runs to 264 residues: MKPYLELLQHVLEYGAEKSDRTGTGTRSVFGWQMRFDLNAGFPLVTTKKLHLRSIIHELLWFLQGDTNIAYLKDNQVRIWDEWADANGDLGPVYGKQWRRWTGPDGVEIDQMQWLVDEIKRNPDSRRLVISAWNVGELPQMALMPCHSLFQFYVVDGKLSCQLYQRSGDIFLGVPFNIASYALLTHMVAQATGLGVGDFVHTLGDAHLYSNHFEQAREQLTRTPRPLPTLRLNPDVTDLFAFRFEDIAIDGYDPHPAIKAPVAV.

Position 21 (Arg21) interacts with dUMP. A (6R)-5,10-methylene-5,6,7,8-tetrahydrofolate-binding site is contributed by His51. DUMP is bound at residue 126–127 (RR). Catalysis depends on Cys146, which acts as the Nucleophile. DUMP is bound by residues 166–169 (RSGD), Asn177, and 207–209 (HLY). A (6R)-5,10-methylene-5,6,7,8-tetrahydrofolate-binding site is contributed by Asp169. A (6R)-5,10-methylene-5,6,7,8-tetrahydrofolate-binding site is contributed by Ala263.

Belongs to the thymidylate synthase family. Bacterial-type ThyA subfamily. In terms of assembly, homodimer.

The protein localises to the cytoplasm. The catalysed reaction is dUMP + (6R)-5,10-methylene-5,6,7,8-tetrahydrofolate = 7,8-dihydrofolate + dTMP. Its pathway is pyrimidine metabolism; dTTP biosynthesis. Catalyzes the reductive methylation of 2'-deoxyuridine-5'-monophosphate (dUMP) to 2'-deoxythymidine-5'-monophosphate (dTMP) while utilizing 5,10-methylenetetrahydrofolate (mTHF) as the methyl donor and reductant in the reaction, yielding dihydrofolate (DHF) as a by-product. This enzymatic reaction provides an intracellular de novo source of dTMP, an essential precursor for DNA biosynthesis. This Xanthomonas campestris pv. campestris (strain 8004) protein is Thymidylate synthase.